We begin with the raw amino-acid sequence, 426 residues long: Adenylosuccinate synthetase 2 (426 aa).

Residues 12–18 (GDEGKGK) and 40–42 (GHT) each bind GTP. Residue aspartate 13 is the Proton acceptor of the active site. The Mg(2+) site is built by aspartate 13 and glycine 40. IMP is bound by residues 13 to 16 (DEGK), 38 to 41 (NAGH), arginine 147, asparagine 223, threonine 238, and arginine 302. Histidine 41 functions as the Proton donor in the catalytic mechanism. Position 298-304 (298-304 (TNTGRRR)) interacts with substrate. Residues arginine 304, 330–332 (KLD), and 412–414 (GVG) each bind GTP.

The protein belongs to the adenylosuccinate synthetase family. As to quaternary structure, homodimer. Mg(2+) is required as a cofactor.

Its subcellular location is the cytoplasm. The catalysed reaction is IMP + L-aspartate + GTP = N(6)-(1,2-dicarboxyethyl)-AMP + GDP + phosphate + 2 H(+). Its pathway is purine metabolism; AMP biosynthesis via de novo pathway; AMP from IMP: step 1/2. In terms of biological role, plays an important role in the de novo pathway and in the salvage pathway of purine nucleotide biosynthesis. Catalyzes the first committed step in the biosynthesis of AMP from IMP. The protein is Adenylosuccinate synthetase 2 of Laccaria bicolor (strain S238N-H82 / ATCC MYA-4686) (Bicoloured deceiver).